The following is a 229-amino-acid chain: Potassium/proton antiporter CemA (229 aa).

A run of 4 helical transmembrane segments spans residues 7 to 27, 114 to 134, 154 to 174, and 189 to 209; these read FTPL…SLSF, LICF…LLIL, ILLL…ELMI, and IISG…KYWI.

Belongs to the CemA family.

The protein localises to the plastid. Its subcellular location is the chloroplast inner membrane. The enzyme catalyses K(+)(in) + H(+)(out) = K(+)(out) + H(+)(in). Functionally, contributes to K(+)/H(+) antiport activity by supporting proton efflux to control proton extrusion and homeostasis in chloroplasts in a light-dependent manner to modulate photosynthesis. Prevents excessive induction of non-photochemical quenching (NPQ) under continuous-light conditions. Indirectly promotes efficient inorganic carbon uptake into chloroplasts. The chain is Potassium/proton antiporter CemA from Gossypium barbadense (Sea Island cotton).